The primary structure comprises 132 residues: Small ribosomal subunit protein uS8 (132 aa).

The protein belongs to the universal ribosomal protein uS8 family. In terms of assembly, part of the 30S ribosomal subunit. Contacts proteins S5 and S12.

Its function is as follows. One of the primary rRNA binding proteins, it binds directly to 16S rRNA central domain where it helps coordinate assembly of the platform of the 30S subunit. This is Small ribosomal subunit protein uS8 from Xylella fastidiosa (strain 9a5c).